The primary structure comprises 256 residues: RNA polymerase sigma factor SigI1 (256 aa).

The short motif at 67-80 is the Polymerase core binding element; it reads DEFSIALSAFNEAI. The segment at residues 205-224 is a DNA-binding region (H-T-H motif); that stretch reads RNELKKKAKVHGRTIGNNRK.

The protein belongs to the sigma-70 factor family. SigI subfamily. As to quaternary structure, interacts with RsgI1.

It localises to the cytoplasm. With respect to regulation, negatively regulated by the anti-sigma-I factor RsgI1. Binding of the polysaccharide substrate to RsgI1 may lead to the release and activation of SigI1. In terms of biological role, sigma factors are initiation factors that promote the attachment of RNA polymerase to specific initiation sites and are then released. This sigma factor is involved in regulation of cellulosomal genes via an external polysaccharide-sensing mechanism. SigI1 promotes transcription from sigI1 and celS promoters. This chain is RNA polymerase sigma factor SigI1, found in Acetivibrio thermocellus (strain ATCC 27405 / DSM 1237 / JCM 9322 / NBRC 103400 / NCIMB 10682 / NRRL B-4536 / VPI 7372) (Clostridium thermocellum).